A 664-amino-acid chain; its full sequence is UvrABC system protein B (664 aa).

Positions 23-412 constitute a Helicase ATP-binding domain; sequence EGLNRGMRFQ…VVEQIIRPTG (390 aa). 36-43 lines the ATP pocket; sequence GVTGSGKT. Positions 89-112 match the Beta-hairpin motif; sequence YYDYYQPEAYIPTKDLYIEKNADI. Residues 429-588 enclose the Helicase C-terminal domain; the sequence is DLVNEIVKVK…ITPRSVIKPL (160 aa). The region spanning 622 to 657 is the UVR domain; the sequence is EEYMAVLEEEMYRAASELRYEDAAALRDELFRIREE.

This sequence belongs to the UvrB family. As to quaternary structure, forms a heterotetramer with UvrA during the search for lesions. Interacts with UvrC in an incision complex.

The protein localises to the cytoplasm. In terms of biological role, the UvrABC repair system catalyzes the recognition and processing of DNA lesions. A damage recognition complex composed of 2 UvrA and 2 UvrB subunits scans DNA for abnormalities. Upon binding of the UvrA(2)B(2) complex to a putative damaged site, the DNA wraps around one UvrB monomer. DNA wrap is dependent on ATP binding by UvrB and probably causes local melting of the DNA helix, facilitating insertion of UvrB beta-hairpin between the DNA strands. Then UvrB probes one DNA strand for the presence of a lesion. If a lesion is found the UvrA subunits dissociate and the UvrB-DNA preincision complex is formed. This complex is subsequently bound by UvrC and the second UvrB is released. If no lesion is found, the DNA wraps around the other UvrB subunit that will check the other stand for damage. The chain is UvrABC system protein B from Thermotoga maritima (strain ATCC 43589 / DSM 3109 / JCM 10099 / NBRC 100826 / MSB8).